Consider the following 81-residue polypeptide: MSHSVKIYDTCIGCTQCVRACPTDVLEMIPWDGCKAKQIASAPRTEDCVGCKRCESACPTDFLSVRVYLSHETTRSMGLAY.

2 consecutive 4Fe-4S ferredoxin-type domains span residues 2 to 31 and 39 to 68; these read SHSV…MIPW and IASA…VRVY. Cys-11, Cys-14, Cys-17, Cys-21, Cys-48, Cys-51, Cys-54, and Cys-58 together coordinate [4Fe-4S] cluster.

In terms of assembly, the eukaryotic PSI reaction center is composed of at least 11 subunits. [4Fe-4S] cluster serves as cofactor.

It is found in the plastid. The protein localises to the chloroplast thylakoid membrane. The catalysed reaction is reduced [plastocyanin] + hnu + oxidized [2Fe-2S]-[ferredoxin] = oxidized [plastocyanin] + reduced [2Fe-2S]-[ferredoxin]. Functionally, apoprotein for the two 4Fe-4S centers FA and FB of photosystem I (PSI); essential for photochemical activity. FB is the terminal electron acceptor of PSI, donating electrons to ferredoxin. The C-terminus interacts with PsaA/B/D and helps assemble the protein into the PSI complex. Required for binding of PsaD and PsaE to PSI. PSI is a plastocyanin-ferredoxin oxidoreductase, converting photonic excitation into a charge separation, which transfers an electron from the donor P700 chlorophyll pair to the spectroscopically characterized acceptors A0, A1, FX, FA and FB in turn. This is Photosystem I iron-sulfur center from Arabis hirsuta (Hairy rock-cress).